A 461-amino-acid chain; its full sequence is tRNA modification GTPase MnmE (461 aa).

Residues arginine 22, glutamate 87, and arginine 126 each contribute to the (6S)-5-formyl-5,6,7,8-tetrahydrofolate site. Residues 222-382 (GITAVIAGKP…LENKLYEILI (161 aa)) enclose the TrmE-type G domain. Asparagine 232 is a binding site for K(+). GTP-binding positions include 232 to 237 (NVGKSS), 251 to 257 (TDIPGTT), 276 to 279 (DTAG), and 363 to 365 (SAR). Serine 236 serves as a coordination point for Mg(2+). K(+)-binding residues include threonine 251, isoleucine 253, and threonine 256. Threonine 257 is a binding site for Mg(2+). Lysine 461 lines the (6S)-5-formyl-5,6,7,8-tetrahydrofolate pocket.

This sequence belongs to the TRAFAC class TrmE-Era-EngA-EngB-Septin-like GTPase superfamily. TrmE GTPase family. As to quaternary structure, homodimer. Heterotetramer of two MnmE and two MnmG subunits. K(+) is required as a cofactor.

The protein localises to the cytoplasm. Functionally, exhibits a very high intrinsic GTPase hydrolysis rate. Involved in the addition of a carboxymethylaminomethyl (cmnm) group at the wobble position (U34) of certain tRNAs, forming tRNA-cmnm(5)s(2)U34. In Carboxydothermus hydrogenoformans (strain ATCC BAA-161 / DSM 6008 / Z-2901), this protein is tRNA modification GTPase MnmE.